The sequence spans 63 residues: Adipokinetic prohormone type 1 (63 aa).

The first 22 residues, 1–22 (MVQRCALVVLLVVAVAAALCSA), serve as a signal peptide directing secretion. At Q23 the chain carries Pyrrolidone carboxylic acid. Residue T32 is modified to Threonine amide.

Belongs to the AKH/HRTH/RPCH family.

The protein localises to the secreted. This hormone, released from cells in the corpora cardiaca, causes release of diglycerides from the fat body and stimulation of muscles to use these diglycerides as an energy source during energy-demanding processes. The sequence is that of Adipokinetic prohormone type 1 from Locusta migratoria (Migratory locust).